The sequence spans 116 residues: Ribonuclease P protein component (116 aa).

Belongs to the RnpA family. Consists of a catalytic RNA component (M1 or rnpB) and a protein subunit.

It catalyses the reaction Endonucleolytic cleavage of RNA, removing 5'-extranucleotides from tRNA precursor.. In terms of biological role, RNaseP catalyzes the removal of the 5'-leader sequence from pre-tRNA to produce the mature 5'-terminus. It can also cleave other RNA substrates such as 4.5S RNA. The protein component plays an auxiliary but essential role in vivo by binding to the 5'-leader sequence and broadening the substrate specificity of the ribozyme. In Bacillus velezensis (strain DSM 23117 / BGSC 10A6 / LMG 26770 / FZB42) (Bacillus amyloliquefaciens subsp. plantarum), this protein is Ribonuclease P protein component.